A 540-amino-acid polypeptide reads, in one-letter code: MAGKQILFREDARRALERGVNALADAVKVTLGPKGRNVVLEKKFGSPQIINDGVSIAREIELADPVENMGAQLVKEVATKTNDVAGDGTTTATVLAQAIIREGLKNVTAGANPMILRKGIEKAVAKAVEEIKAIAKPVETSEAIAQVAAISANDEEIGKLIAEAMEKVGKDGVITVEESQGLGTTLEVVEGMSFDRGYISPYMITDPDKMEAILNDPYILITDKKISAIADLLPILEKVVQTGKPLLIIAEDVEGEALATLVVNKLRGTLTCVAVKAPGFGDRRKAMLEDIAILTNGQVVSEELGFKLENATLSMLGRAKQVRVKKEETIIVGGQGSPEAIEKRIAQIKKQIEETTSDFDREKLQERLAKLAGGVAVIQVGAATETEMKEKKLRIEDALNATRAAVEEGIVAGGGTTYIHIIKALEELEKTATGDERTGIAIVRKALEEPLKQIAINAGLEGSVIVEKVKTLPVGHGFNALTEEYVDMIAAGIVDPAKVTRSALQNAASVAAMLLTTEALVAEKPEKEKKGPDMPNMDMM.

ATP contacts are provided by residues 30–33 (TLGP), 87–91 (DGTTT), G414, 479–481 (NAL), and D495.

It belongs to the chaperonin (HSP60) family. In terms of assembly, forms a cylinder of 14 subunits composed of two heptameric rings stacked back-to-back. Interacts with the co-chaperonin GroES.

The protein resides in the cytoplasm. It carries out the reaction ATP + H2O + a folded polypeptide = ADP + phosphate + an unfolded polypeptide.. Functionally, together with its co-chaperonin GroES, plays an essential role in assisting protein folding. The GroEL-GroES system forms a nano-cage that allows encapsulation of the non-native substrate proteins and provides a physical environment optimized to promote and accelerate protein folding. The sequence is that of Chaperonin GroEL from Carboxydothermus hydrogenoformans (strain ATCC BAA-161 / DSM 6008 / Z-2901).